The following is a 69-amino-acid chain: Snake venom metalloproteinase BnP2 (69 aa).

The region spanning 1 to 69 is the Peptidase M12B domain; sequence YIELAVVADH…EWRERDIIPR (69 aa). Residue Glu3 participates in Ca(2+) binding.

This sequence belongs to the venom metalloproteinase (M12B) family. P-I subfamily. As to quaternary structure, monomer. Zn(2+) serves as cofactor. Expressed by the venom gland.

It is found in the secreted. Inhibited by EDTA. Its function is as follows. This protein is a zinc protease from snake venom that is devoid of significant myotoxic and hemorrhagic activities. It hydrolyzes the Aalpha-chain and more slowly the Bbeta-chain of fibrin and fibrinogen, without affecting the gamma-chains. It induces cell detachment and a apoptosis (anoikis) in endothelial cells. In Bothrops pauloensis (Neuwied's lancehead), this protein is Snake venom metalloproteinase BnP2.